The following is a 153-amino-acid chain: Xanthine-guanine phosphoribosyltransferase (153 aa).

5-phospho-alpha-D-ribose 1-diphosphate-binding positions include 37–38 and 89–97; these read RG and DDLVDTGNT. D90 contributes to the Mg(2+) binding site. Positions 93 and 136 each coordinate guanine. Residues D93 and I136 each coordinate xanthine. Residues 93 to 97 and 135 to 136 each bind GMP; these read DTGNT and WI.

Belongs to the purine/pyrimidine phosphoribosyltransferase family. XGPT subfamily. Homotetramer. It depends on Mg(2+) as a cofactor.

Its subcellular location is the cell inner membrane. The catalysed reaction is GMP + diphosphate = guanine + 5-phospho-alpha-D-ribose 1-diphosphate. It carries out the reaction XMP + diphosphate = xanthine + 5-phospho-alpha-D-ribose 1-diphosphate. The enzyme catalyses IMP + diphosphate = hypoxanthine + 5-phospho-alpha-D-ribose 1-diphosphate. The protein operates within purine metabolism; GMP biosynthesis via salvage pathway; GMP from guanine: step 1/1. Its pathway is purine metabolism; XMP biosynthesis via salvage pathway; XMP from xanthine: step 1/1. Purine salvage pathway enzyme that catalyzes the transfer of the ribosyl-5-phosphate group from 5-phospho-alpha-D-ribose 1-diphosphate (PRPP) to the N9 position of the 6-oxopurines guanine and xanthine to form the corresponding ribonucleotides GMP (guanosine 5'-monophosphate) and XMP (xanthosine 5'-monophosphate), with the release of PPi. To a lesser extent, also acts on hypoxanthine. The sequence is that of Xanthine-guanine phosphoribosyltransferase from Pasteurella multocida (strain Pm70).